The sequence spans 387 residues: Gamma-butyrobetaine dioxygenase (387 aa).

Zn(2+) contacts are provided by cysteine 38, cysteine 40, cysteine 43, and histidine 82. Fe cation is bound by residues histidine 202, aspartate 204, and histidine 347. Position 351 is a phosphoserine (serine 351).

The protein belongs to the gamma-BBH/TMLD family. The cofactor is Fe(2+). L-ascorbate is required as a cofactor.

Its subcellular location is the cytoplasm. The catalysed reaction is 4-(trimethylamino)butanoate + 2-oxoglutarate + O2 = carnitine + succinate + CO2. It participates in amine and polyamine biosynthesis; carnitine biosynthesis. Its function is as follows. Catalyzes the formation of L-carnitine from gamma-butyrobetaine. This Pongo abelii (Sumatran orangutan) protein is Gamma-butyrobetaine dioxygenase (BBOX1).